Here is a 209-residue protein sequence, read N- to C-terminus: Na(+)-translocating NADH-quinone reductase subunit D (209 aa).

Helical transmembrane passes span 42-62 (LVMT…ISLI), 66-86 (IPGS…VIVV), 103-123 (VFVG…AYAM), 131-151 (FMDG…VGFL), and 178-198 (NGLF…IWGL).

Belongs to the NqrDE/RnfAE family. As to quaternary structure, composed of six subunits; NqrA, NqrB, NqrC, NqrD, NqrE and NqrF.

The protein resides in the cell inner membrane. It catalyses the reaction a ubiquinone + n Na(+)(in) + NADH + H(+) = a ubiquinol + n Na(+)(out) + NAD(+). Its function is as follows. NQR complex catalyzes the reduction of ubiquinone-1 to ubiquinol by two successive reactions, coupled with the transport of Na(+) ions from the cytoplasm to the periplasm. NqrA to NqrE are probably involved in the second step, the conversion of ubisemiquinone to ubiquinol. The protein is Na(+)-translocating NADH-quinone reductase subunit D of Proteus mirabilis (strain HI4320).